Here is a 404-residue protein sequence, read N- to C-terminus: Formate-dependent phosphoribosylglycinamide formyltransferase (404 aa).

N(1)-(5-phospho-beta-D-ribosyl)glycinamide is bound by residues 25-26 (EL) and E85. ATP is bound by residues R118, K159, 164–169 (SSGKGQ), 199–202 (EGFV), and E207. One can recognise an ATP-grasp domain in the interval 123–318 (RLAAEELGLP…EFELHARAIL (196 aa)). 2 residues coordinate Mg(2+): E277 and E289. N(1)-(5-phospho-beta-D-ribosyl)glycinamide is bound by residues D296, K365, and 372 to 373 (RR).

This sequence belongs to the PurK/PurT family. In terms of assembly, homodimer.

The catalysed reaction is N(1)-(5-phospho-beta-D-ribosyl)glycinamide + formate + ATP = N(2)-formyl-N(1)-(5-phospho-beta-D-ribosyl)glycinamide + ADP + phosphate + H(+). Its pathway is purine metabolism; IMP biosynthesis via de novo pathway; N(2)-formyl-N(1)-(5-phospho-D-ribosyl)glycinamide from N(1)-(5-phospho-D-ribosyl)glycinamide (formate route): step 1/1. In terms of biological role, involved in the de novo purine biosynthesis. Catalyzes the transfer of formate to 5-phospho-ribosyl-glycinamide (GAR), producing 5-phospho-ribosyl-N-formylglycinamide (FGAR). Formate is provided by PurU via hydrolysis of 10-formyl-tetrahydrofolate. The sequence is that of Formate-dependent phosphoribosylglycinamide formyltransferase from Burkholderia cenocepacia (strain HI2424).